Consider the following 393-residue polypeptide: Succinate--CoA ligase [ADP-forming] subunit beta (393 aa).

An ATP-grasp domain is found at Arg-9 to Ala-237. Residues Lys-45, Gly-52–Gly-54, Glu-92, Pro-95, and Glu-100 each bind ATP. Mg(2+) contacts are provided by Asn-192 and Asp-206. Residues Asn-257 and Gly-319–Thr-321 each bind substrate.

Belongs to the succinate/malate CoA ligase beta subunit family. In terms of assembly, heterotetramer of two alpha and two beta subunits. Mg(2+) is required as a cofactor.

The enzyme catalyses succinate + ATP + CoA = succinyl-CoA + ADP + phosphate. The catalysed reaction is GTP + succinate + CoA = succinyl-CoA + GDP + phosphate. It functions in the pathway carbohydrate metabolism; tricarboxylic acid cycle; succinate from succinyl-CoA (ligase route): step 1/1. Succinyl-CoA synthetase functions in the citric acid cycle (TCA), coupling the hydrolysis of succinyl-CoA to the synthesis of either ATP or GTP and thus represents the only step of substrate-level phosphorylation in the TCA. The beta subunit provides nucleotide specificity of the enzyme and binds the substrate succinate, while the binding sites for coenzyme A and phosphate are found in the alpha subunit. The chain is Succinate--CoA ligase [ADP-forming] subunit beta from Streptomyces griseus subsp. griseus (strain JCM 4626 / CBS 651.72 / NBRC 13350 / KCC S-0626 / ISP 5235).